A 101-amino-acid polypeptide reads, in one-letter code: Small ribosomal subunit protein uS14 (101 aa).

Belongs to the universal ribosomal protein uS14 family. Part of the 30S ribosomal subunit. Contacts proteins S3 and S10.

Its function is as follows. Binds 16S rRNA, required for the assembly of 30S particles and may also be responsible for determining the conformation of the 16S rRNA at the A site. The polypeptide is Small ribosomal subunit protein uS14 (Polaromonas sp. (strain JS666 / ATCC BAA-500)).